Consider the following 515-residue polypeptide: tRNA-2-methylthio-N(6)-dimethylallyladenosine synthase (515 aa).

Residues 25 to 140 (KTYQVRTFGC…LPALLNRARH (116 aa)) form the MTTase N-terminal domain. [4Fe-4S] cluster is bound by residues C34, C69, C103, C177, C181, and C184. Residues 163–393 (RDSVYAGWVS…TALQDRIAAE (231 aa)) enclose the Radical SAM core domain. Residues 396–466 (AKQLGRKVEV…AFHLVADPAG (71 aa)) form the TRAM domain. The disordered stretch occupies residues 482–515 (DRSQADSCGVPAAGAASGKAGVSLGMPSLPTRRA). The span at 490 to 506 (GVPAAGAASGKAGVSLG) shows a compositional bias: low complexity.

This sequence belongs to the methylthiotransferase family. MiaB subfamily. In terms of assembly, monomer. [4Fe-4S] cluster is required as a cofactor.

Its subcellular location is the cytoplasm. The enzyme catalyses N(6)-dimethylallyladenosine(37) in tRNA + (sulfur carrier)-SH + AH2 + 2 S-adenosyl-L-methionine = 2-methylsulfanyl-N(6)-dimethylallyladenosine(37) in tRNA + (sulfur carrier)-H + 5'-deoxyadenosine + L-methionine + A + S-adenosyl-L-homocysteine + 2 H(+). Its function is as follows. Catalyzes the methylthiolation of N6-(dimethylallyl)adenosine (i(6)A), leading to the formation of 2-methylthio-N6-(dimethylallyl)adenosine (ms(2)i(6)A) at position 37 in tRNAs that read codons beginning with uridine. The sequence is that of tRNA-2-methylthio-N(6)-dimethylallyladenosine synthase from Paenarthrobacter aurescens (strain TC1).